The sequence spans 248 residues: tRNA (guanine-N(1)-)-methyltransferase (248 aa).

S-adenosyl-L-methionine is bound by residues G114 and 134–139 (IGDYVL).

This sequence belongs to the RNA methyltransferase TrmD family. As to quaternary structure, homodimer.

The protein localises to the cytoplasm. It carries out the reaction guanosine(37) in tRNA + S-adenosyl-L-methionine = N(1)-methylguanosine(37) in tRNA + S-adenosyl-L-homocysteine + H(+). In terms of biological role, specifically methylates guanosine-37 in various tRNAs. The protein is tRNA (guanine-N(1)-)-methyltransferase of Blochmanniella floridana.